The chain runs to 144 residues: Large ribosomal subunit protein uL15 (144 aa).

Residues 1–49 (MRLNTLSPAAGSKSAPKRVGRGIGSGLGKTAGRGHKGQKSRSGGGVRVG) are disordered. A compositionally biased stretch (gly residues) spans 21-31 (RGIGSGLGKTA).

Belongs to the universal ribosomal protein uL15 family. As to quaternary structure, part of the 50S ribosomal subunit.

In terms of biological role, binds to the 23S rRNA. The chain is Large ribosomal subunit protein uL15 from Shewanella denitrificans (strain OS217 / ATCC BAA-1090 / DSM 15013).